The primary structure comprises 248 residues: Adenosylcobinamide-GDP ribazoletransferase (248 aa).

6 helical membrane passes run 34-54 (LVFA…LFYI), 58-78 (FFPP…LTGG), 113-133 (AVLA…SIPL), 139-159 (ALLL…GSTV), 185-205 (IIYF…LAAA), and 227-247 (DILG…FYLF).

This sequence belongs to the CobS family. Requires Mg(2+) as cofactor.

It is found in the cell membrane. The enzyme catalyses alpha-ribazole + adenosylcob(III)inamide-GDP = adenosylcob(III)alamin + GMP + H(+). It catalyses the reaction alpha-ribazole 5'-phosphate + adenosylcob(III)inamide-GDP = adenosylcob(III)alamin 5'-phosphate + GMP + H(+). It participates in cofactor biosynthesis; adenosylcobalamin biosynthesis; adenosylcobalamin from cob(II)yrinate a,c-diamide: step 7/7. Functionally, joins adenosylcobinamide-GDP and alpha-ribazole to generate adenosylcobalamin (Ado-cobalamin). Also synthesizes adenosylcobalamin 5'-phosphate from adenosylcobinamide-GDP and alpha-ribazole 5'-phosphate. The protein is Adenosylcobinamide-GDP ribazoletransferase of Acetivibrio thermocellus (strain ATCC 27405 / DSM 1237 / JCM 9322 / NBRC 103400 / NCIMB 10682 / NRRL B-4536 / VPI 7372) (Clostridium thermocellum).